The chain runs to 252 residues: Thiazole synthase (252 aa).

The Schiff-base intermediate with DXP role is filled by lysine 91. 1-deoxy-D-xylulose 5-phosphate is bound by residues glycine 152, alanine 179–glycine 180, and asparagine 201–threonine 202.

This sequence belongs to the ThiG family. Homotetramer. Forms heterodimers with either ThiH or ThiS.

Its subcellular location is the cytoplasm. It catalyses the reaction [ThiS sulfur-carrier protein]-C-terminal-Gly-aminoethanethioate + 2-iminoacetate + 1-deoxy-D-xylulose 5-phosphate = [ThiS sulfur-carrier protein]-C-terminal Gly-Gly + 2-[(2R,5Z)-2-carboxy-4-methylthiazol-5(2H)-ylidene]ethyl phosphate + 2 H2O + H(+). The protein operates within cofactor biosynthesis; thiamine diphosphate biosynthesis. Its function is as follows. Catalyzes the rearrangement of 1-deoxy-D-xylulose 5-phosphate (DXP) to produce the thiazole phosphate moiety of thiamine. Sulfur is provided by the thiocarboxylate moiety of the carrier protein ThiS. In vitro, sulfur can be provided by H(2)S. The protein is Thiazole synthase of Gluconobacter oxydans (strain 621H) (Gluconobacter suboxydans).